The sequence spans 231 residues: Axial regulator YABBY 4 (231 aa).

A C4-type zinc finger spans residues 26 to 53; sequence CGFCTTILLVSVPFTSLSMVVTVRCGHC. Disordered stretches follow at residues 98-120 and 211-231; these read KVNQ…EDED and NNGF…SPFE.

It belongs to the YABBY family. In terms of assembly, interacts with SPL/NZZ.

Its subcellular location is the nucleus. Essential for the formation and the abaxial-adaxial asymmetric growth of the ovule outer integument. The protein is Axial regulator YABBY 4 (YAB4) of Arabidopsis thaliana (Mouse-ear cress).